The following is a 203-amino-acid chain: Molybdenum cofactor guanylyltransferase (203 aa).

GTP is bound by residues 20 to 22 (LAG), K33, N61, D78, and D108. A Mg(2+)-binding site is contributed by D108.

This sequence belongs to the MobA family. In terms of assembly, monomer. Mg(2+) serves as cofactor.

It localises to the cytoplasm. The enzyme catalyses Mo-molybdopterin + GTP + H(+) = Mo-molybdopterin guanine dinucleotide + diphosphate. Its function is as follows. Transfers a GMP moiety from GTP to Mo-molybdopterin (Mo-MPT) cofactor (Moco or molybdenum cofactor) to form Mo-molybdopterin guanine dinucleotide (Mo-MGD) cofactor. This Vibrio cholerae serotype O1 (strain ATCC 39315 / El Tor Inaba N16961) protein is Molybdenum cofactor guanylyltransferase.